Here is a 277-residue protein sequence, read N- to C-terminus: MAFSGTSRTLTQQSSAASTDELHNILFSRRAIQEMATKCDLGRHHWMRADNAVCVRPLVPETTSNLLTRWFVSGYEAGELPSKGYMSVPQVLCAVTRTVTSDAEGSLRIYLADLGDKERAPIDAQVVSLHNRDLPAIVSFHPTYDCPMEQLNGVGRCFALVIERCGYIGHNGTTASVCSNWQPKFSSKNNNYKPAAAGKTLVLPYDRLSELSGPSAVARLLKSQLNMSASRIQLPGYVFNVRYVVSLRILRNRQSQPNARVDSEPQVFSKPVVVNGI.

It belongs to the cucumovirus movement protein family.

It localises to the host cell junction. The protein resides in the host plasmodesma. Functionally, transports viral genome to neighboring plant cells directly through plasmosdesmata, without any budding. The movement protein allows efficient cell to cell propagation, by bypassing the host cell wall barrier. Acts by forming a tubular structure at the host plasmodesmata, enlarging it enough to allow free passage of virion capsids. In Canna (Florist's daisy), this protein is Movement protein.